The sequence spans 352 residues: UDP-N-acetylglucosamine--N-acetylmuramyl-(pentapeptide) pyrophosphoryl-undecaprenol N-acetylglucosamine transferase (352 aa).

Positions 195 and 287 each coordinate UDP-N-acetyl-alpha-D-glucosamine.

This sequence belongs to the glycosyltransferase 28 family. MurG subfamily.

Its subcellular location is the cell membrane. It catalyses the reaction Mur2Ac(oyl-L-Ala-gamma-D-Glu-L-Lys-D-Ala-D-Ala)-di-trans,octa-cis-undecaprenyl diphosphate + UDP-N-acetyl-alpha-D-glucosamine = beta-D-GlcNAc-(1-&gt;4)-Mur2Ac(oyl-L-Ala-gamma-D-Glu-L-Lys-D-Ala-D-Ala)-di-trans,octa-cis-undecaprenyl diphosphate + UDP + H(+). It functions in the pathway cell wall biogenesis; peptidoglycan biosynthesis. Cell wall formation. Catalyzes the transfer of a GlcNAc subunit on undecaprenyl-pyrophosphoryl-MurNAc-pentapeptide (lipid intermediate I) to form undecaprenyl-pyrophosphoryl-MurNAc-(pentapeptide)GlcNAc (lipid intermediate II). The protein is UDP-N-acetylglucosamine--N-acetylmuramyl-(pentapeptide) pyrophosphoryl-undecaprenol N-acetylglucosamine transferase of Streptococcus pneumoniae serotype 19F (strain G54).